Consider the following 188-residue polypeptide: Elongation factor P (188 aa).

This sequence belongs to the elongation factor P family.

It is found in the cytoplasm. It functions in the pathway protein biosynthesis; polypeptide chain elongation. In terms of biological role, involved in peptide bond synthesis. Stimulates efficient translation and peptide-bond synthesis on native or reconstituted 70S ribosomes in vitro. Probably functions indirectly by altering the affinity of the ribosome for aminoacyl-tRNA, thus increasing their reactivity as acceptors for peptidyl transferase. This is Elongation factor P from Leptospira borgpetersenii serovar Hardjo-bovis (strain JB197).